The primary structure comprises 257 residues: Methylthioribulose-1-phosphate dehydratase (257 aa).

A disordered region spans residues 1–33 (MVSSQEKMASISDIIQKDEDSGSEKTESQDKEH). The span at 15 to 33 (IQKDEDSGSEKTESQDKEH) shows a compositional bias: basic and acidic residues. Cys-107 is a binding site for substrate. 2 residues coordinate Zn(2+): His-125 and His-127. Glu-149 serves as the catalytic Proton donor/acceptor. A Zn(2+)-binding site is contributed by His-205.

The protein belongs to the aldolase class II family. MtnB subfamily. The cofactor is Zn(2+).

The protein resides in the cytoplasm. The enzyme catalyses 5-(methylsulfanyl)-D-ribulose 1-phosphate = 5-methylsulfanyl-2,3-dioxopentyl phosphate + H2O. It functions in the pathway amino-acid biosynthesis; L-methionine biosynthesis via salvage pathway; L-methionine from S-methyl-5-thio-alpha-D-ribose 1-phosphate: step 2/6. In terms of biological role, catalyzes the dehydration of methylthioribulose-1-phosphate (MTRu-1-P) into 2,3-diketo-5-methylthiopentyl-1-phosphate (DK-MTP-1-P). Functions in the methionine salvage pathway. May play a role in apoptosis. The sequence is that of Methylthioribulose-1-phosphate dehydratase from Esox lucius (Northern pike).